The primary structure comprises 569 residues: MPATISRADYAAMFGPTTGDRLRLADTDLIIEVERDLTTYGEEVKFGGGKVIRDGMGQAQTTRAEGAVDTVITNALIVDHSGIYKADVGLKNGRIAKIGKAGNPDTQPGVDIIVGPGTEAIAGEGRILTAGGFDSHIHFICPQQIEDALHSGLTTMLGGGTGPAHGTLATTCTPGPWHIGRMLQAADAFPMNLAFAGKGNASLPAALEEQVLGGACALKLHEDWGTTPAAIDCCLSVADAMDVQVMIHTDTLNESGFVENTVAAMKGRTIHAFHTEGAGGGHAPDIIKICGEEHVLPSSTNPTRPFTVNTLEEHLDMLMVCHHLDKSIPEDVAFAESRIRRETIAAEDILHDMGAFSIIASDSQAMGRVGEVLIRTWQTADKMRKQRGRLAEETGDNDNFRVRRYIAKYTINPAIAHGIGHEIGSIEEGKRADLVLWNPAFFGVKPEMVLLGGTIVMAQMGDPNASIPTPQPVYSRPMFGAYGRSVENCAVTFVSAAAHEDGIGARLGLAKETLAVTNTRNIGKSHLILNNATPQIEVNPETYEVRADGELLTCQPAEVLPMAQRYFLF.

Positions glycine 131 to phenylalanine 569 constitute a Urease domain. Histidine 136, histidine 138, and lysine 219 together coordinate Ni(2+). The residue at position 219 (lysine 219) is an N6-carboxylysine. Histidine 221 contacts substrate. Residues histidine 248 and histidine 274 each coordinate Ni(2+). The Proton donor role is filled by histidine 322. Aspartate 362 serves as a coordination point for Ni(2+).

This sequence belongs to the metallo-dependent hydrolases superfamily. Urease alpha subunit family. In terms of assembly, heterotrimer of UreA (gamma), UreB (beta) and UreC (alpha) subunits. Three heterotrimers associate to form the active enzyme. It depends on Ni cation as a cofactor. Post-translationally, carboxylation allows a single lysine to coordinate two nickel ions.

It is found in the cytoplasm. It carries out the reaction urea + 2 H2O + H(+) = hydrogencarbonate + 2 NH4(+). The protein operates within nitrogen metabolism; urea degradation; CO(2) and NH(3) from urea (urease route): step 1/1. The sequence is that of Urease subunit alpha from Ruegeria pomeroyi (strain ATCC 700808 / DSM 15171 / DSS-3) (Silicibacter pomeroyi).